The chain runs to 323 residues: Nucleotide-binding protein ZMO1325 (323 aa).

25–32 (GLSGAGKS) is a binding site for ATP. 78–81 (DSRT) is a binding site for GTP.

The protein belongs to the RapZ-like family.

Functionally, displays ATPase and GTPase activities. This chain is Nucleotide-binding protein ZMO1325, found in Zymomonas mobilis subsp. mobilis (strain ATCC 31821 / ZM4 / CP4).